We begin with the raw amino-acid sequence, 335 residues long: Holliday junction branch migration complex subunit RuvB (335 aa).

The segment at 4–184 (ADRLIDATEK…FGIVQRLEFY (181 aa)) is large ATPase domain (RuvB-L). ATP is bound by residues Ile-23, Arg-24, Gly-65, Lys-68, Thr-69, Thr-70, 131–133 (EDY), Arg-174, Tyr-184, and Arg-221. Mg(2+) is bound at residue Thr-69. The segment at 185–255 (SVEDLSYIVG…VAELALNMID (71 aa)) is small ATPAse domain (RuvB-S). The segment at 258-335 (KSGFDYMDRK…HHFGLLPKQD (78 aa)) is head domain (RuvB-H). Arg-313 and Arg-318 together coordinate DNA.

Belongs to the RuvB family. As to quaternary structure, homohexamer. Forms an RuvA(8)-RuvB(12)-Holliday junction (HJ) complex. HJ DNA is sandwiched between 2 RuvA tetramers; dsDNA enters through RuvA and exits via RuvB. An RuvB hexamer assembles on each DNA strand where it exits the tetramer. Each RuvB hexamer is contacted by two RuvA subunits (via domain III) on 2 adjacent RuvB subunits; this complex drives branch migration. In the full resolvosome a probable DNA-RuvA(4)-RuvB(12)-RuvC(2) complex forms which resolves the HJ.

The protein resides in the cytoplasm. The catalysed reaction is ATP + H2O = ADP + phosphate + H(+). In terms of biological role, the RuvA-RuvB-RuvC complex processes Holliday junction (HJ) DNA during genetic recombination and DNA repair, while the RuvA-RuvB complex plays an important role in the rescue of blocked DNA replication forks via replication fork reversal (RFR). RuvA specifically binds to HJ cruciform DNA, conferring on it an open structure. The RuvB hexamer acts as an ATP-dependent pump, pulling dsDNA into and through the RuvAB complex. RuvB forms 2 homohexamers on either side of HJ DNA bound by 1 or 2 RuvA tetramers; 4 subunits per hexamer contact DNA at a time. Coordinated motions by a converter formed by DNA-disengaged RuvB subunits stimulates ATP hydrolysis and nucleotide exchange. Immobilization of the converter enables RuvB to convert the ATP-contained energy into a lever motion, pulling 2 nucleotides of DNA out of the RuvA tetramer per ATP hydrolyzed, thus driving DNA branch migration. The RuvB motors rotate together with the DNA substrate, which together with the progressing nucleotide cycle form the mechanistic basis for DNA recombination by continuous HJ branch migration. Branch migration allows RuvC to scan DNA until it finds its consensus sequence, where it cleaves and resolves cruciform DNA. In Pseudoalteromonas translucida (strain TAC 125), this protein is Holliday junction branch migration complex subunit RuvB.